Consider the following 352-residue polypeptide: Small glutamine-rich tetratricopeptide repeat-containing protein 2 (352 aa).

A compositionally biased stretch (low complexity) spans P80–P97. The disordered stretch occupies residues P80 to A103. 3 TPR repeats span residues A105–S138, V140–F172, and G173–N206. The disordered stretch occupies residues K217–G236.

It belongs to the SGT family.

In terms of biological role, co-chaperone that binds to the molecular chaperone Hsp70 and regulates Hsp70 ATPase activity. In Mycosarcoma maydis (Corn smut fungus), this protein is Small glutamine-rich tetratricopeptide repeat-containing protein 2.